Here is a 453-residue protein sequence, read N- to C-terminus: tRNA modification GTPase MnmE (453 aa).

Residues arginine 22, glutamate 79, and lysine 119 each coordinate (6S)-5-formyl-5,6,7,8-tetrahydrofolate. One can recognise a TrmE-type G domain in the interval glycine 215 to glycine 376. Asparagine 225 contributes to the K(+) binding site. Residues asparagine 225–serine 230, threonine 244–threonine 250, aspartate 269–glycine 272, and asparagine 334–aspartate 337 each bind GTP. Serine 229 contacts Mg(2+). 3 residues coordinate K(+): threonine 244, isoleucine 246, and threonine 249. Threonine 250 contributes to the Mg(2+) binding site. Residue lysine 453 coordinates (6S)-5-formyl-5,6,7,8-tetrahydrofolate.

Belongs to the TRAFAC class TrmE-Era-EngA-EngB-Septin-like GTPase superfamily. TrmE GTPase family. As to quaternary structure, homodimer. Heterotetramer of two MnmE and two MnmG subunits. It depends on K(+) as a cofactor.

The protein localises to the cytoplasm. In terms of biological role, exhibits a very high intrinsic GTPase hydrolysis rate. Involved in the addition of a carboxymethylaminomethyl (cmnm) group at the wobble position (U34) of certain tRNAs, forming tRNA-cmnm(5)s(2)U34. This is tRNA modification GTPase MnmE from Shewanella putrefaciens (strain CN-32 / ATCC BAA-453).